A 358-amino-acid chain; its full sequence is 3-dehydroquinate synthase (358 aa).

Residues 70–75 (DGEQYK), 104–108 (GVVGD), 128–129 (TT), Lys-141, Lys-150, and 168–171 (CLNT) each bind NAD(+). 3 residues coordinate Zn(2+): Glu-183, His-246, and His-263.

Belongs to the sugar phosphate cyclases superfamily. Dehydroquinate synthase family. Co(2+) is required as a cofactor. Zn(2+) serves as cofactor. The cofactor is NAD(+).

The protein localises to the cytoplasm. The enzyme catalyses 7-phospho-2-dehydro-3-deoxy-D-arabino-heptonate = 3-dehydroquinate + phosphate. It participates in metabolic intermediate biosynthesis; chorismate biosynthesis; chorismate from D-erythrose 4-phosphate and phosphoenolpyruvate: step 2/7. In terms of biological role, catalyzes the conversion of 3-deoxy-D-arabino-heptulosonate 7-phosphate (DAHP) to dehydroquinate (DHQ). The protein is 3-dehydroquinate synthase of Shewanella sediminis (strain HAW-EB3).